The primary structure comprises 20 residues: Short cationic peptide-4b (20 aa).

Position 20 is a glutamic acid 1-amide (Glu20).

Expressed by the venom gland.

The protein localises to the secreted. The sequence is that of Short cationic peptide-4b from Cupiennius salei (American wandering spider).